The sequence spans 428 residues: C4-dicarboxylate transport protein (428 aa).

9 helical membrane passes run 7 to 27 (SLYF…IVAP), 40 to 60 (FIKL…VLGI), 75 to 95 (LALL…LLIV), 143 to 163 (AFAR…GIAL), 196 to 216 (PIGA…GSLF), 221 to 241 (LMAT…GAIA), 306 to 326 (IYLT…MTLG), 329 to 349 (FTLL…TGSG), and 351 to 371 (IVLA…LALI).

It belongs to the dicarboxylate/amino acid:cation symporter (DAACS) (TC 2.A.23) family.

The protein localises to the cell inner membrane. In terms of biological role, responsible for the transport of dicarboxylates such as succinate, fumarate, and malate from the periplasm across the membrane. In Solibacter usitatus (strain Ellin6076), this protein is C4-dicarboxylate transport protein.